The chain runs to 505 residues: Cobyric acid synthase (505 aa).

Residues 260 to 453 (RIAVAAIYFP…FHGIIDEPEV (194 aa)) form the GATase cobBQ-type domain. The active-site Nucleophile is Cys-341. Residue His-445 is part of the active site.

It belongs to the CobB/CobQ family. CobQ subfamily.

The protein operates within cofactor biosynthesis; adenosylcobalamin biosynthesis. Catalyzes amidations at positions B, D, E, and G on adenosylcobyrinic A,C-diamide. NH(2) groups are provided by glutamine, and one molecule of ATP is hydrogenolyzed for each amidation. The protein is Cobyric acid synthase of Chlorobium phaeobacteroides (strain DSM 266 / SMG 266 / 2430).